Reading from the N-terminus, the 350-residue chain is Phenylalanine--tRNA ligase alpha subunit (350 aa).

Glu-257 is a Mg(2+) binding site.

This sequence belongs to the class-II aminoacyl-tRNA synthetase family. Phe-tRNA synthetase alpha subunit type 1 subfamily. Tetramer of two alpha and two beta subunits. The cofactor is Mg(2+).

Its subcellular location is the cytoplasm. The enzyme catalyses tRNA(Phe) + L-phenylalanine + ATP = L-phenylalanyl-tRNA(Phe) + AMP + diphosphate + H(+). The polypeptide is Phenylalanine--tRNA ligase alpha subunit (Listeria welshimeri serovar 6b (strain ATCC 35897 / DSM 20650 / CCUG 15529 / CIP 8149 / NCTC 11857 / SLCC 5334 / V8)).